The sequence spans 951 residues: Exportin-2 (951 aa).

Residues 29 to 104 (ATSKIQKFVK…KSLLLNFILS (76 aa)) enclose the Importin N-terminal domain.

Belongs to the XPO2/CSE1 family.

The protein resides in the cytoplasm. The protein localises to the nucleus. Functionally, export receptor for importin alpha. Mediates importin-alpha re-export from the nucleus to the cytoplasm after import substrates have been released into the nucleoplasm. The chain is Exportin-2 (xpo2) from Dictyostelium discoideum (Social amoeba).